A 283-amino-acid chain; its full sequence is 2-dehydro-3-deoxyphosphooctonate aldolase (283 aa).

It belongs to the KdsA family.

The protein resides in the cytoplasm. The catalysed reaction is D-arabinose 5-phosphate + phosphoenolpyruvate + H2O = 3-deoxy-alpha-D-manno-2-octulosonate-8-phosphate + phosphate. It functions in the pathway carbohydrate biosynthesis; 3-deoxy-D-manno-octulosonate biosynthesis; 3-deoxy-D-manno-octulosonate from D-ribulose 5-phosphate: step 2/3. The protein operates within bacterial outer membrane biogenesis; lipopolysaccharide biosynthesis. The polypeptide is 2-dehydro-3-deoxyphosphooctonate aldolase (Vibrio cholerae serotype O1 (strain ATCC 39315 / El Tor Inaba N16961)).